Consider the following 377-residue polypeptide: Serine/threonine-protein phosphatase PP2A-2 catalytic subunit (377 aa).

Positions 1–66 (MDMEIDDPMH…SGIADHKSSK (66 aa)) are disordered. The segment covering 28 to 40 (DDGKNNTKARSND) has biased composition (basic and acidic residues). Ser38 is subject to Phosphoserine. Phosphothreonine is present on Thr43. Residues Asp125, His127, Asp153, and Asn185 each coordinate Mn(2+). His186 (proton donor) is an active-site residue. 2 residues coordinate Mn(2+): His235 and His309. The residue at position 377 (Leu377) is a Leucine methyl ester.

Belongs to the PPP phosphatase family. PP-2A subfamily. In terms of assembly, inactivated in a complex with phosphatase methylesterase PPE1 (PP2Ai). Interacts with phosphatase 2A activator RRD2, which can reactivate PP2Ai by dissociating the catalytic subunit from the complex. Interacts with TAP42. It depends on Mn(2+) as a cofactor. In terms of processing, reversibly methyl esterified on Leu-377 by leucine carboxyl methyltransferase 1 (PPM1) and protein phosphatase methylesterase 1 (PPE1). Carboxyl methylation influences the affinity of the catalytic subunit for the different regulatory subunits, thereby modulating the PP2A holoenzyme's substrate specificity, enzyme activity and cellular localization.

The enzyme catalyses O-phospho-L-seryl-[protein] + H2O = L-seryl-[protein] + phosphate. It catalyses the reaction O-phospho-L-threonyl-[protein] + H2O = L-threonyl-[protein] + phosphate. In terms of biological role, exact function not known, phosphatase 2A performs an essential cellular function. In Saccharomyces cerevisiae (strain ATCC 204508 / S288c) (Baker's yeast), this protein is Serine/threonine-protein phosphatase PP2A-2 catalytic subunit (PPH22).